We begin with the raw amino-acid sequence, 208 residues long: Uracil phosphoribosyltransferase (208 aa).

5-phospho-alpha-D-ribose 1-diphosphate is bound by residues Arg78, Arg103, and 130-138 (DPMLATGGS). Uracil-binding positions include Ile193 and 198 to 200 (GDA). Asp199 contacts 5-phospho-alpha-D-ribose 1-diphosphate.

Belongs to the UPRTase family. Mg(2+) serves as cofactor.

The catalysed reaction is UMP + diphosphate = 5-phospho-alpha-D-ribose 1-diphosphate + uracil. Its pathway is pyrimidine metabolism; UMP biosynthesis via salvage pathway; UMP from uracil: step 1/1. Its activity is regulated as follows. Allosterically activated by GTP. Catalyzes the conversion of uracil and 5-phospho-alpha-D-ribose 1-diphosphate (PRPP) to UMP and diphosphate. In Shewanella frigidimarina (strain NCIMB 400), this protein is Uracil phosphoribosyltransferase.